We begin with the raw amino-acid sequence, 873 residues long: MVANGHFAGSADGQDSSSYEHGVQVIDEDKEFNPNVSKYLTYENVTPAGFNYHLISVFGSQSTGKSTLLNNLFGTHFSVMSETERRQTTKGIWLSKNKRLELRKDRDPQAKMADNILVMDVEGTDGRERGEDQDFERKSALFALATSEVLIVNIWEHQVGLYQGANMGLLKTVFEVNLELFLKDNKSTPRSLLFFVIRDFLGTTPLQNLQNTLLQDLNRIWSSLSKPAGLENSTINDYFDFAFAGLPHKNFQPDKFMDEVQKLSTRFCEGHRDPSSLDRKGTGSIEGGIFLPEYHRRIPADGFAVYAEGVWDQIVNNKDLDLPTQQELLAQFRCDEISREALVAFDEAISPFESKQAEAVQAGTPEVLGGLGPAMRNARMKAVKNFDTEACRYHKRVYQMKKTELQDKIDTRLKALFLGQLNAAHRSGVQEFSESVSAAVKAGQKKGASYDFAEIVRRQRKLAIEKFEKEARSTLVEDAPWSNYQQELSLYQKDLERTSGQLRRDEMRRLATRVERWVRSRLGESVDLEFNALGSGRGGSGAPEFGDKPSEKTIWDRVWTLFVDTVLDAERRFTERASSFDAGLDEVDVGLWRLRRKSWGVLRAKIDEEMMEGNLLLKLRENFEDKFRYDDAGVPRIWRPTDDIESVYSQARESTLTLIPLLARFKLAETNAPPPLDKWIGHTPSSATPADEEDLTPIGGVDDDEGKSLEEEMTLIGEAKKQDLTVRFKKTADGVYVEAKRSAIGGITQVPLYFYGLLFALGWNEILAVLRNPVYFLLLFVCAIGAYITYQLNLWGPIIKMTEAASHQAVEEGKRRLREFLEASDTGRQAMAMSGARNATEEHEMSRLSRKPAERGGRKNRADEDVDDDDDDF.

The segment at 1–21 (MVANGHFAGSADGQDSSSYEH) is disordered. At 1–749 (MVANGHFAGS…KRSAIGGITQ (749 aa)) the chain is on the cytoplasmic side. The 259-residue stretch at 49 to 307 (GFNYHLISVF…IPADGFAVYA (259 aa)) folds into the GB1/RHD3-type G domain. 59–66 (GSQSTGKS) is a GTP binding site. Residues 482 to 506 (SNYQQELSLYQKDLERTSGQLRRDE) are a coiled coil. Residues 676–703 (LDKWIGHTPSSATPADEEDLTPIGGVDD) form a disordered region. Over residues 690-703 (ADEEDLTPIGGVDD) the composition is skewed to acidic residues. The chain crosses the membrane as a helical span at residues 750 to 770 (VPLYFYGLLFALGWNEILAVL). Residues 771 to 773 (RNP) are Lumenal-facing. The chain crosses the membrane as a helical span at residues 774 to 794 (VYFLLLFVCAIGAYITYQLNL). Residues 795–873 (WGPIIKMTEA…EDVDDDDDDF (79 aa)) are Cytoplasmic-facing. The disordered stretch occupies residues 828–873 (RQAMAMSGARNATEEHEMSRLSRKPAERGGRKNRADEDVDDDDDDF). The segment covering 839 to 863 (ATEEHEMSRLSRKPAERGGRKNRAD) has biased composition (basic and acidic residues). The segment covering 864–873 (EDVDDDDDDF) has biased composition (acidic residues).

This sequence belongs to the TRAFAC class dynamin-like GTPase superfamily. GB1/RHD3 GTPase family. RHD3 subfamily.

The protein resides in the endoplasmic reticulum membrane. Its function is as follows. Cooperates with the reticulon proteins and tubule-shaping DP1 family proteins to generate and maintain the structure of the tubular endoplasmic reticulum network. Has GTPase activity, which is required for its function in ER organization. This Ajellomyces capsulatus (strain G186AR / H82 / ATCC MYA-2454 / RMSCC 2432) (Darling's disease fungus) protein is Protein SEY1.